The sequence spans 220 residues: Protein-L-isoaspartate O-methyltransferase (220 aa).

Ser-69 is a catalytic residue.

Belongs to the methyltransferase superfamily. L-isoaspartyl/D-aspartyl protein methyltransferase family.

Its subcellular location is the cytoplasm. The catalysed reaction is [protein]-L-isoaspartate + S-adenosyl-L-methionine = [protein]-L-isoaspartate alpha-methyl ester + S-adenosyl-L-homocysteine. Functionally, catalyzes the methyl esterification of L-isoaspartyl residues in peptides and proteins that result from spontaneous decomposition of normal L-aspartyl and L-asparaginyl residues. It plays a role in the repair and/or degradation of damaged proteins. This Alcanivorax borkumensis (strain ATCC 700651 / DSM 11573 / NCIMB 13689 / SK2) protein is Protein-L-isoaspartate O-methyltransferase.